The primary structure comprises 708 residues: Ion-translocating oxidoreductase complex subunit C (708 aa).

2 consecutive 4Fe-4S ferredoxin-type domains span residues 369–397 (GEPQEEQSCIRCSACADACPADLLPQQLY) and 407–436 (KATTHNIADCIECGACAWVCPSNIPLVQYF). 8 residues coordinate [4Fe-4S] cluster: cysteine 377, cysteine 380, cysteine 383, cysteine 387, cysteine 416, cysteine 419, cysteine 422, and cysteine 426. A disordered region spans residues 630–682 (AKARKLEQQQANAEPEEQIDPRKAAVEAAIARAKARKLEQQQANAEPEEQIDP).

This sequence belongs to the 4Fe4S bacterial-type ferredoxin family. RnfC subfamily. The complex is composed of six subunits: RsxA, RsxB, RsxC, RsxD, RsxE and RsxG. [4Fe-4S] cluster serves as cofactor.

It is found in the cell inner membrane. Functionally, part of a membrane-bound complex that couples electron transfer with translocation of ions across the membrane. Required to maintain the reduced state of SoxR. The sequence is that of Ion-translocating oxidoreductase complex subunit C from Escherichia coli (strain UTI89 / UPEC).